The primary structure comprises 572 residues: Proline--tRNA ligase (572 aa).

This sequence belongs to the class-II aminoacyl-tRNA synthetase family. ProS type 1 subfamily. As to quaternary structure, homodimer.

The protein resides in the cytoplasm. It carries out the reaction tRNA(Pro) + L-proline + ATP = L-prolyl-tRNA(Pro) + AMP + diphosphate. In terms of biological role, catalyzes the attachment of proline to tRNA(Pro) in a two-step reaction: proline is first activated by ATP to form Pro-AMP and then transferred to the acceptor end of tRNA(Pro). As ProRS can inadvertently accommodate and process non-cognate amino acids such as alanine and cysteine, to avoid such errors it has two additional distinct editing activities against alanine. One activity is designated as 'pretransfer' editing and involves the tRNA(Pro)-independent hydrolysis of activated Ala-AMP. The other activity is designated 'posttransfer' editing and involves deacylation of mischarged Ala-tRNA(Pro). The misacylated Cys-tRNA(Pro) is not edited by ProRS. The protein is Proline--tRNA ligase of Dichelobacter nodosus (strain VCS1703A).